The following is a 500-amino-acid chain: Glycerol kinase (500 aa).

Threonine 13 contributes to the ADP binding site. Residues threonine 13, threonine 14, and serine 15 each contribute to the ATP site. Threonine 13 is a sn-glycerol 3-phosphate binding site. An ADP-binding site is contributed by arginine 17. Sn-glycerol 3-phosphate contacts are provided by arginine 83, glutamate 84, tyrosine 135, and aspartate 244. Residues arginine 83, glutamate 84, tyrosine 135, aspartate 244, and glutamine 245 each coordinate glycerol. Residues threonine 266 and glycine 309 each coordinate ADP. Residues threonine 266, glycine 309, glutamine 313, and glycine 410 each contribute to the ATP site. Positions 410 and 414 each coordinate ADP.

The protein belongs to the FGGY kinase family.

The catalysed reaction is glycerol + ATP = sn-glycerol 3-phosphate + ADP + H(+). The protein operates within polyol metabolism; glycerol degradation via glycerol kinase pathway; sn-glycerol 3-phosphate from glycerol: step 1/1. With respect to regulation, inhibited by fructose 1,6-bisphosphate (FBP). Key enzyme in the regulation of glycerol uptake and metabolism. Catalyzes the phosphorylation of glycerol to yield sn-glycerol 3-phosphate. This is Glycerol kinase from Burkholderia vietnamiensis (strain G4 / LMG 22486) (Burkholderia cepacia (strain R1808)).